A 102-amino-acid chain; its full sequence is MVKVVSAENFNSFIATGLVLIDFFAEWCGPCKMLTPVLESLEAEVSSVLIGKVNIDDHPAPAEQYGVSSIPTLILFKDGKEVDRVVGLKDKDSLIRLINQHS.

The Thioredoxin domain occupies 1-102 (MVKVVSAENF…SLIRLINQHS (102 aa)). A disulfide bridge connects residues Cys28 and Cys31.

This sequence belongs to the thioredoxin family.

Functionally, participates in various redox reactions through the reversible oxidation of its active center dithiol to a disulfide and catalyzes dithiol-disulfide exchange reactions. The protein is Thioredoxin (trxA) of Chlamydia caviae (strain ATCC VR-813 / DSM 19441 / 03DC25 / GPIC) (Chlamydophila caviae).